An 818-amino-acid polypeptide reads, in one-letter code: Serine/threonine-protein phosphatase 4 regulatory subunit 3 (818 aa).

Positions 1–100 (MTDTRRRVKV…DEIWEKICQV (100 aa)) constitute a WH1 domain. Residues 670-681 (FNTDEEDLEDGE) are compositionally biased toward acidic residues. The tract at residues 670-818 (FNTDEEDLED…PLSKKSKLSS (149 aa)) is disordered. The segment covering 703 to 718 (FMERKKLKDSEEKEVL) has biased composition (basic and acidic residues). The segment covering 729–775 (SPSFKLSFSSSPKASLSSPPTASLHPGSPGSPSSPGTGARSSPPSAA) has biased composition (low complexity). Phosphoserine occurs at positions 769 and 770. The span at 788 to 803 (YPDDDEEDEDEEDADS) shows a compositional bias: acidic residues.

This sequence belongs to the SMEK family. Serine/threonine-protein phosphatase 4 (PP4) occurs in different assemblies of the catalytic and one or more regulatory subunits.

Its function is as follows. Regulatory subunit of serine/threonine-protein phosphatase 4. The polypeptide is Serine/threonine-protein phosphatase 4 regulatory subunit 3 (smek1) (Danio rerio (Zebrafish)).